Reading from the N-terminus, the 417-residue chain is Gamma-glutamyl phosphate reductase (417 aa).

The protein belongs to the gamma-glutamyl phosphate reductase family.

It localises to the cytoplasm. It catalyses the reaction L-glutamate 5-semialdehyde + phosphate + NADP(+) = L-glutamyl 5-phosphate + NADPH + H(+). It functions in the pathway amino-acid biosynthesis; L-proline biosynthesis; L-glutamate 5-semialdehyde from L-glutamate: step 2/2. Functionally, catalyzes the NADPH-dependent reduction of L-glutamate 5-phosphate into L-glutamate 5-semialdehyde and phosphate. The product spontaneously undergoes cyclization to form 1-pyrroline-5-carboxylate. This chain is Gamma-glutamyl phosphate reductase, found in Heliobacterium modesticaldum (strain ATCC 51547 / Ice1).